The sequence spans 1218 residues: Chitin synthase 4 (1218 aa).

2 disordered regions span residues 1-93 (MAEP…PERN) and 132-190 (TVSS…RRQK). Over residues 14–34 (TRDKSHSPYRESPSRRLRDVE) the composition is skewed to basic and acidic residues. An N-linked (GlcNAc...) asparagine glycan is attached at asparagine 50. Polar residues-rich tracts occupy residues 71-80 (SNPNPMSQSD) and 133-142 (VSSGSTQQDT). Residues 175–190 (RKDTRNLTEEEKRRQK) show a composition bias toward basic and acidic residues. Asparagine 180 carries N-linked (GlcNAc...) asparagine glycosylation. Helical transmembrane passes span 200-220 (IWNIYCAVVTFWAPDCLLQCF) and 235-255 (VGLISIILLIAAFVGFLTFGF). N-linked (GlcNAc...) asparagine glycans are attached at residues asparagine 365, asparagine 404, and asparagine 426. A helical membrane pass occupies residues 487-507 (VVLYVSLVFILAIVAAKFFLA). 2 disordered regions span residues 548–570 (PKITDPASTVTGSDGRTSKRGSM) and 582–606 (YAVDRRSSRPPPTTMTSQSSNAKLL). Positions 553–562 (PASTVTGSDG) are enriched in polar residues. 3 N-linked (GlcNAc...) asparagine glycosylation sites follow: asparagine 617, asparagine 903, and asparagine 1030. Helical transmembrane passes span 1062–1082 (IGTLVLPAAISFTFYLIIISI), 1087–1107 (VPVIPLVLLALILGLPAILIV), and 1115–1135 (YILWMGIYLLSLPIWNFVLPA). The tract at residues 1188–1218 (QANGSVWNQQPPTRPPSGYGSMHGFEPYRDY) is disordered. The span at 1189 to 1198 (ANGSVWNQQP) shows a compositional bias: polar residues. N-linked (GlcNAc...) asparagine glycosylation occurs at asparagine 1190.

Belongs to the chitin synthase family. Class IV subfamily. Post-translationally, maximal activity requires trypsin activation, suggesting a zymogenic nature.

Its subcellular location is the cell membrane. The enzyme catalyses [(1-&gt;4)-N-acetyl-beta-D-glucosaminyl](n) + UDP-N-acetyl-alpha-D-glucosamine = [(1-&gt;4)-N-acetyl-beta-D-glucosaminyl](n+1) + UDP + H(+). Activity is stimulated by Mg(2+), and is more inhibited by polyoxin D than by nikkomycin. Functionally, polymerizes chitin, a structural polymer of the cell wall and septum, by transferring the sugar moiety of UDP-GlcNAc to the non-reducing end of the growing chitin polymer. CHS4 synthesizes a large amount of chitin and appears to play a role in the process of cell separation. CHS4 is particularly well suited for functioning at the higher temperatures associated with its poorly characterized saprophic environment and with human infection. This chain is Chitin synthase 4, found in Exophiala dermatitidis (strain ATCC 34100 / CBS 525.76 / NIH/UT8656) (Black yeast).